We begin with the raw amino-acid sequence, 1621 residues long: Nestin (1621 aa).

Met1 bears the N-acetylmethionine mark. The interval 1–7 (MEGCMGE) is head. Positions 8–43 (ESFQMWELNRRLEAYLARVKALEEQNELLSAELGGL) are coil 1A. The region spanning 8–313 (ESFQMWELNR…TLLEAENSRL (306 aa)) is the IF rod domain. The interval 44–55 (RAQSADTSWRAH) is linker 1. A coil 1B region spans residues 56 to 151 (ADDELAALRA…VAHEEERVGL (96 aa)). Residues 152-173 (NAQAACAPRCPAPPRGPPAPAP) form a linker 12 region. Residues 174 to 192 (EVEELARRLGEAWRGAVRG) form a coil 2A region. The tract at residues 193-195 (YQE) is linker 2. Positions 196–313 (RVAHMETSLG…TLLEAENSRL (118 aa)) are coil 2B. A Phosphoserine modification is found at Ser311. The segment at 314–1621 (QTPGGGSKTS…DRESWSSGED (1308 aa)) is tail. A Phosphothreonine modification is found at Thr315. The residue at position 325 (Ser325) is a Phosphoserine. Thr338 carries the phosphothreonine modification. Phosphoserine occurs at positions 355 and 358. At Thr388 the chain carries Phosphothreonine. A phosphoserine mark is found at Ser398, Ser471, Ser476, Ser548, Ser564, Ser578, Ser588, Ser638, Ser680, Ser702, Ser746, and Ser768. The segment at 439–490 (SVLPGPEEPGGQRQEASTGQSPEDHASLAPPLSPDHSSLEAKDGESGGSRVF) is disordered. Residues 670-788 (LEKENQEPLR…PPEKVDLEPL (119 aa)) form a disordered region. Composition is skewed to basic and acidic residues over residues 687–725 (EALR…LKTL), 736–770 (LETE…RSLG), and 779–788 (PPEKVDLEPL). Ser790 is subject to Phosphoserine. Lys811 participates in a covalent cross-link: Glycyl lysine isopeptide (Lys-Gly) (interchain with G-Cter in SUMO1); alternate. Lys811 is covalently cross-linked (Glycyl lysine isopeptide (Lys-Gly) (interchain with G-Cter in SUMO2); alternate). 3 positions are modified to phosphoserine: Ser820, Ser831, and Ser842. Thr851 carries the post-translational modification Phosphothreonine. Ser894, Ser905, Ser913, and Ser934 each carry phosphoserine. The segment at 895–1593 (LGAWNLENLR…GSALKTSWAG (699 aa)) is disordered. 4 stretches are compositionally biased toward basic and acidic residues: residues 904–936 (RSPE…RSLE), 949–960 (QRWEDTVEKDQE), 980–994 (LNLR…KEEV), and 1012–1024 (GHPE…EQRG). Phosphoserine is present on Ser1016. The segment covering 1085-1098 (GSEPAMGESAAGAE) has biased composition (low complexity). Residues 1099–1110 (PGPGQGVGGLGD) are compositionally biased toward gly residues. Basic and acidic residues-rich tracts occupy residues 1129-1145 (LEAK…KDLE) and 1159-1184 (GKSR…RGAE). 8 positions are modified to phosphoserine: Ser1261, Ser1282, Ser1286, Ser1310, Ser1347, Ser1409, Ser1418, and Ser1452. Residues 1275-1292 (PQEEGEESREESEEDELG) show a composition bias toward acidic residues. Over residues 1409–1428 (SDGFADEEESGEEGEEDQEE) the composition is skewed to acidic residues. Composition is skewed to low complexity over residues 1440-1453 (GSSV…SSSQ) and 1460-1470 (SDSVSVSVPWD). Positions 1486 to 1495 (ETESQDSAEP) are enriched in polar residues. Phosphoserine is present on residues Ser1496, Ser1498, Ser1577, Ser1617, and Ser1618.

It belongs to the intermediate filament family. Forms homodimers and homotetramers in vitro. In mixtures with other intermediate filament proteins such as vimentin and alpha-internexin, tis protein preferentially forms heterodimers which can assemble to form intermediate filaments if nestin does not exceed 25%. Interacts with FHOD3. Post-translationally, constitutively phosphorylated. This increases during mitosis when the cytoplasmic intermediate filament network is reorganized. CNS stem cells.

In terms of biological role, required for brain and eye development. Promotes the disassembly of phosphorylated vimentin intermediate filaments (IF) during mitosis and may play a role in the trafficking and distribution of IF proteins and other cellular factors to daughter cells during progenitor cell division. Required for survival, renewal and mitogen-stimulated proliferation of neural progenitor cells. This is Nestin (NES) from Homo sapiens (Human).